Consider the following 1424-residue polypeptide: Serine/threonine-protein kinase LMTK3 (1424 aa).

An N-terminal signal peptide occupies residues 1–20 (MPAPGALILLAAVSASGCLA). The chain crosses the membrane as a helical span at residues 40–60 (AVVLISCSGLLAFIFLLLTCL). The interval 74-95 (NPEGEDCSGEYTPPAEETSSSQ) is disordered. In terms of domain architecture, Protein kinase spans 133 to 411 (LSYLQEIGSG…SDLQLQLTYL (279 aa)). ATP-binding positions include 139-147 (IGSGWFGKV) and Lys-164. Phosphoserine is present on Ser-232. Asp-266 acts as the Proton acceptor in catalysis. Disordered regions lie at residues 413-465 (SERP…PDDV) and 486-516 (RGAG…PFYE). A compositionally biased stretch (pro residues) spans 418 to 439 (RPPPPPPPPRDGPFPWPWPPSH). Arg-490 bears the Omega-N-methylarginine mark. Pro residues predominate over residues 496 to 507 (PWQPASAPPAPH). Ser-531 and Ser-535 each carry phosphoserine. Disordered regions lie at residues 544 to 666 (EHGS…PLPC), 680 to 964 (LERG…MSPE), 976 to 1024 (MSPK…APET), 1041 to 1313 (GLEM…RKRK), and 1325 to 1424 (LFDQ…PVEN). A compositionally biased stretch (polar residues) spans 571–584 (QTPSEVPQLVSETW). The segment covering 638–647 (AEEEEEESSP) has biased composition (acidic residues). Basic and acidic residues predominate over residues 700–713 (PPEDDSSLRAERGS). Over residues 744 to 758 (RGPPPAPPPPPPPPR) the composition is skewed to pro residues. Low complexity predominate over residues 759 to 791 (ASAEPAASPDPPSALASPGSGLSSPGPKPGDSG). A compositionally biased stretch (pro residues) spans 818–841 (PRAPPEPPDPGAPRPPPDPGPLPL). The segment covering 935-954 (DMKEKVAENGLESPEKEERA) has biased composition (basic and acidic residues). 3 positions are modified to phosphoserine: Ser-947, Ser-962, and Ser-977. Positions 994–1004 (RNTERPPEIGP) are enriched in basic and acidic residues. Residues 1084-1094 (GSGGRALGGVG) are compositionally biased toward gly residues. The span at 1095-1105 (TAPAGGPASAV) shows a compositional bias: low complexity. Over residues 1167–1177 (DPLKPERKGPE) the composition is skewed to basic and acidic residues. The span at 1200–1213 (SRLSLALPPLTLTP) shows a compositional bias: low complexity. The segment covering 1231–1241 (AAGGEAGGAGA) has biased composition (gly residues). Residues 1245–1261 (AEEDGEDEDEDEEDEEA) are compositionally biased toward acidic residues. Residues 1262 to 1272 (AGSRDPGRTRE) are compositionally biased toward basic and acidic residues. Polar residues predominate over residues 1329 to 1339 (ETPTNELSVQG). Positions 1348-1360 (STPPAPPTPPHPT) are enriched in pro residues.

Belongs to the protein kinase superfamily. Tyr protein kinase family. In terms of assembly, interacts with ESR1. Interacts with AP-2 complex subunit alpha. The cofactor is Mg(2+). In terms of processing, autophosphorylated. As to expression, expressed in brain. Predominantly expressed in cerebral cortex, thalamus, the cerebellum and hippocampal formation (at protein level).

It localises to the membrane. It is found in the cell projection. The protein localises to the axon. Its subcellular location is the dendrite. The protein resides in the golgi apparatus membrane. It catalyses the reaction L-seryl-[protein] + ATP = O-phospho-L-seryl-[protein] + ADP + H(+). It carries out the reaction L-threonyl-[protein] + ATP = O-phospho-L-threonyl-[protein] + ADP + H(+). Protein kinase which phosphorylates ESR1 (in vitro) and protects it against proteasomal degradation. May also regulate ESR1 levels indirectly via a PKC-AKT-FOXO3 pathway where it decreases the activity of PKC and the phosphorylation of AKT, thereby increasing binding of transcriptional activator FOXO3 to the ESR1 promoter and increasing ESR1 transcription. Involved in endocytic trafficking of N-methyl-D-aspartate receptors (NMDAR) in neurons. The chain is Serine/threonine-protein kinase LMTK3 (Lmtk3) from Mus musculus (Mouse).